The primary structure comprises 198 residues: Glycerol-3-phosphate acyltransferase (198 aa).

The next 5 membrane-spanning stretches (helical) occupy residues 2 to 22 (IIDL…FGVL), 53 to 73 (LGFI…VIAT), 79 to 99 (PFMY…SCFL), 113 to 133 (VLIP…TFFI), and 152 to 172 (IILF…IMAL).

It belongs to the PlsY family. In terms of assembly, probably interacts with PlsX.

The protein localises to the cell membrane. It catalyses the reaction an acyl phosphate + sn-glycerol 3-phosphate = a 1-acyl-sn-glycero-3-phosphate + phosphate. It participates in lipid metabolism; phospholipid metabolism. Its function is as follows. Catalyzes the transfer of an acyl group from acyl-phosphate (acyl-PO(4)) to glycerol-3-phosphate (G3P) to form lysophosphatidic acid (LPA). This enzyme utilizes acyl-phosphate as fatty acyl donor, but not acyl-CoA or acyl-ACP. This is Glycerol-3-phosphate acyltransferase from Lawsonia intracellularis (strain PHE/MN1-00).